Consider the following 209-residue polypeptide: Fibroblast growth factor 21 (209 aa).

The signal sequence occupies residues 1–28; it reads MDSDETGFEHSGLWVSVLAGLLLGACQA. The segment at 143-209 is disordered; the sequence is PLHLPGNKSP…SQGRSPSYAS (67 aa). Over residues 168–186 the composition is skewed to pro residues; the sequence is PGLPPALPEPPGILAPQPP.

This sequence belongs to the heparin-binding growth factors family. Interacts (via C-terminus) with KLB; this interaction is direct. Interacts with FGFR4.

It localises to the secreted. Functionally, stimulates glucose uptake in differentiated adipocytes via the induction of glucose transporter SLC2A1/GLUT1 expression (but not SLC2A4/GLUT4 expression). Activity requires the presence of KLB. Regulates systemic glucose homeostasis and insulin sensitivity. The chain is Fibroblast growth factor 21 (FGF21) from Homo sapiens (Human).